The chain runs to 461 residues: Aldehyde dehydrogenase LUC3 (461 aa).

215–220 contacts NAD(+); sequence GSTATG. Catalysis depends on residues glutamate 237 and cysteine 271.

The protein belongs to the aldehyde dehydrogenase family.

The catalysed reaction is an aldehyde + NAD(+) + H2O = a carboxylate + NADH + 2 H(+). The protein operates within mycotoxin biosynthesis. In terms of biological role, aldehyde dehydrogenase; part of the gene cluster that mediates the biosynthesis of the mycotoxin lucilactaene and the lucilactaene-related compound NG-391 that act as cell cycle inhibitors with potent growth inhibitory activity against malarial parasites, moderate growth inhibitory activity against cancer cells, and no activity against bacteria and fungi. LUC3 is important for lucilactaene biosynthesis and performs the oxidation of the C-20 alcoholic analog prelucilactaene G into a carboxylic derivative that has still to be identified. The pathway begins with the hybrid PKS-NRPS synthetase LUC5 which is responsible for the condensation of one acetyl-coenzyme A (CoA) unit with six malonyl-CoA units and the amide linkage of the arising heptaketide and homoserine, subsequently releasing the first intermediate prelucilactaene B. Both the cytochrome P450 monooxygenase LUC2 and the hydrolase LUC6 function in parallel in modification of prelucilactaene B. LUC6 may catalyze the 2-pyrrolidone ring formation to form prelucilactaene C from prelucilactaene B, followed by C-15 hydroxylation by the same enzyme to give prelucilactaene D, which is then converted to prelucilactaene E by epoxidation, and finally to prelucilactaene F by cyclization. Prelucilactane D, prelucilactaene E, and prelucilactaene F can be converted to dihydrolucilactaene, NG391, and lucilactaene, respectively, via C-20 methyl group hydroxylation by the cytochrome P450 monooxygenase LUC2. However, LUC2, unlike FUS8 in fusarin C biosynthesis, is not enough for the full oxidation of the C-20 methyl group into carboxylic acid, which is a prerequisite for the final methylation step. The aldehyde dehydrogenase LUC3 is involved in the biosynthesis by further oxidation of the C-20 alcoholic analog prelucilactaene G into a carboxylic derivative. This unidentified carboxylic derivative may be converted to demethyllucilactaene. As the last step, the methyltransferase LUC1 methylates the hydroxyl group at C-21 of demethyllucilactaene to generate lucilactaene. This chain is Aldehyde dehydrogenase LUC3, found in Fusarium sp.